A 255-amino-acid chain; its full sequence is Menaquinone reductase, iron-sulfur cluster-binding subunit (255 aa).

3 4Fe-4S ferredoxin-type domains span residues 11–41 (WGMV…PQPD), 66–97 (HDVA…KNEE), and 99–128 (GIVS…FNWF). 12 residues coordinate [4Fe-4S] cluster: cysteine 20, cysteine 23, cysteine 26, cysteine 30, cysteine 75, cysteine 78, cysteine 83, cysteine 87, cysteine 108, cysteine 111, cysteine 114, and cysteine 118. Cysteine 155, cysteine 158, cysteine 188, and cysteine 192 together coordinate [3Fe-4S] cluster.

The Qrc complex is composed of four subunits: QrcA, QrcB, QrcC and QrcD. Can form a supercomplex with the [NiFe] hydrogenase HynA1 and the tetraheme Type I cytochrome c3 TpIc(3), its physiological electron donors. Requires [4Fe-4S] cluster as cofactor. The cofactor is [3Fe-4S] cluster.

Its subcellular location is the periplasm. Its function is as follows. Component of the respiratory Qrc complex, that catalyzes the reduction of the menaquinone pool using electrons transferred from the reduced periplasmic cytochrome c3, and which is probably involved in sulfate respiration. Is likely essential for growth on H(2) or formate since the periplasmic hydrogenases and/or formate dehydrogenases act as primary electron donors for the Qrc complex. QrcC is an electron-transferring subunit; its cubane iron sulfur clusters form a pathway for electron transfer between the hemes of QrcA and the membrane quinone pool. The protein is Menaquinone reductase, iron-sulfur cluster-binding subunit of Nitratidesulfovibrio vulgaris (strain ATCC 29579 / DSM 644 / CCUG 34227 / NCIMB 8303 / VKM B-1760 / Hildenborough) (Desulfovibrio vulgaris).